The following is a 560-amino-acid chain: Eukaryotic translation initiation factor 3 subunit D-1 (560 aa).

The disordered stretch occupies residues Val98–Ser166. The span at Lys100–Asn121 shows a compositional bias: basic residues. The residue at position 128 (Thr128) is a Phosphothreonine. Basic residues predominate over residues Gly147 to His156. The tract at residues Glu291–Pro305 is RNA gate.

This sequence belongs to the eIF-3 subunit D family. In terms of assembly, component of the eukaryotic translation initiation factor 3 (eIF-3) complex. The eIF-3 complex interacts with pix.

It localises to the cytoplasm. MRNA cap-binding component of the eukaryotic translation initiation factor 3 (eIF-3) complex, which is involved in protein synthesis of a specialized repertoire of mRNAs and, together with other initiation factors, stimulates binding of mRNA and methionyl-tRNAi to the 40S ribosome. The eIF-3 complex specifically targets and initiates translation of a subset of mRNAs involved in cell proliferation. In the eIF-3 complex, eif3d specifically recognizes and binds the 7-methylguanosine cap of a subset of mRNAs. This chain is Eukaryotic translation initiation factor 3 subunit D-1, found in Drosophila sechellia (Fruit fly).